The primary structure comprises 428 residues: Glutamyl-tRNA reductase (428 aa).

Substrate is bound by residues 50-53 (TCNR), Ser110, 115-117 (ETQ), and Gln121. The active-site Nucleophile is the Cys51. NADP(+) is bound at residue 190–195 (GAGEMG).

The protein belongs to the glutamyl-tRNA reductase family. In terms of assembly, homodimer.

It carries out the reaction (S)-4-amino-5-oxopentanoate + tRNA(Glu) + NADP(+) = L-glutamyl-tRNA(Glu) + NADPH + H(+). It functions in the pathway porphyrin-containing compound metabolism; protoporphyrin-IX biosynthesis; 5-aminolevulinate from L-glutamyl-tRNA(Glu): step 1/2. Functionally, catalyzes the NADPH-dependent reduction of glutamyl-tRNA(Glu) to glutamate 1-semialdehyde (GSA). This Campylobacter curvus (strain 525.92) protein is Glutamyl-tRNA reductase.